The primary structure comprises 962 residues: Protease 3 (962 aa).

The signal sequence occupies residues 1–23 (MPRSTWFKALLLLVALWAPLSQA). Zn(2+) is bound at residue histidine 88. The Proton acceptor role is filled by glutamate 91. Residues histidine 92 and glutamate 169 each coordinate Zn(2+).

Belongs to the peptidase M16 family. In terms of assembly, monomer. Zn(2+) serves as cofactor.

It is found in the periplasm. The catalysed reaction is Preferential cleavage of 16-Tyr-|-Leu-17 and 25-Phe-|-Tyr-26 bonds of oxidized insulin B chain. Also acts on other substrates of Mw less than 7 kDa such as insulin and glucagon.. In terms of biological role, endopeptidase that degrades small peptides of less than 7 kDa, such as glucagon and insulin. The protein is Protease 3 (ptrA) of Escherichia coli (strain K12).